A 377-amino-acid polypeptide reads, in one-letter code: Phospho-N-acetylmuramoyl-pentapeptide-transferase (377 aa).

11 helical membrane-spanning segments follow: residues 9 to 29 (YITL…LVAG), 59 to 79 (TPTM…LLWA), 85 to 105 (FVWV…MDDY), 122 to 142 (FFWQ…AVSA), 155 to 175 (WVGS…VPFF), 178 to 198 (VSYP…IVGT), 210 to 230 (GLAI…AYVV), 247 to 267 (AAEL…FLWF), 274 to 294 (VFMG…IAVI), 299 to 319 (IVLF…MVQV), and 354 to 374 (QVVV…LSTL).

Belongs to the glycosyltransferase 4 family. MraY subfamily. Mg(2+) is required as a cofactor.

Its subcellular location is the cell inner membrane. The enzyme catalyses UDP-N-acetyl-alpha-D-muramoyl-L-alanyl-gamma-D-glutamyl-meso-2,6-diaminopimeloyl-D-alanyl-D-alanine + di-trans,octa-cis-undecaprenyl phosphate = di-trans,octa-cis-undecaprenyl diphospho-N-acetyl-alpha-D-muramoyl-L-alanyl-D-glutamyl-meso-2,6-diaminopimeloyl-D-alanyl-D-alanine + UMP. It participates in cell wall biogenesis; peptidoglycan biosynthesis. Catalyzes the initial step of the lipid cycle reactions in the biosynthesis of the cell wall peptidoglycan: transfers peptidoglycan precursor phospho-MurNAc-pentapeptide from UDP-MurNAc-pentapeptide onto the lipid carrier undecaprenyl phosphate, yielding undecaprenyl-pyrophosphoryl-MurNAc-pentapeptide, known as lipid I. The protein is Phospho-N-acetylmuramoyl-pentapeptide-transferase of Bordetella bronchiseptica (strain ATCC BAA-588 / NCTC 13252 / RB50) (Alcaligenes bronchisepticus).